We begin with the raw amino-acid sequence, 311 residues long: NAD kinase (311 aa).

Asp-89 acts as the Proton acceptor in catalysis. NAD(+)-binding positions include 89–90 (DG), Arg-94, 163–164 (NE), Asp-193, and 204–209 (TAYAFS).

The protein belongs to the NAD kinase family. A divalent metal cation is required as a cofactor.

It localises to the cytoplasm. It catalyses the reaction NAD(+) + ATP = ADP + NADP(+) + H(+). Involved in the regulation of the intracellular balance of NAD and NADP, and is a key enzyme in the biosynthesis of NADP. Catalyzes specifically the phosphorylation on 2'-hydroxyl of the adenosine moiety of NAD to yield NADP. This chain is NAD kinase, found in Mycobacterium leprae (strain Br4923).